The following is a 104-amino-acid chain: Large ribosomal subunit protein uL24 (104 aa).

This sequence belongs to the universal ribosomal protein uL24 family. Part of the 50S ribosomal subunit.

In terms of biological role, one of two assembly initiator proteins, it binds directly to the 5'-end of the 23S rRNA, where it nucleates assembly of the 50S subunit. Functionally, one of the proteins that surrounds the polypeptide exit tunnel on the outside of the subunit. The protein is Large ribosomal subunit protein uL24 of Shewanella halifaxensis (strain HAW-EB4).